The sequence spans 42 residues: SGISGPLSCGRNGGVCIPIRCPVPMRQIGTCFGRPVKCCRSW.

3 disulfide bridges follow: Cys-9–Cys-38, Cys-16–Cys-31, and Cys-21–Cys-39.

It belongs to the beta-defensin family. As to expression, neutrophilic granules.

The protein localises to the secreted. In terms of biological role, has bactericidal activity. Active against E.coli ML35 and S.aureus 502A. This Bos taurus (Bovine) protein is Beta-defensin 13 (DEFB13).